A 779-amino-acid chain; its full sequence is Endonuclease MutS2 (779 aa).

ATP is bound at residue 328-335 (GPNTGGKT). Residues 704-779 (LDLRGKRYEE…GSGATIVTLG (76 aa)) enclose the Smr domain.

Belongs to the DNA mismatch repair MutS family. MutS2 subfamily. Homodimer. Binds to stalled ribosomes, contacting rRNA.

Endonuclease that is involved in the suppression of homologous recombination and thus may have a key role in the control of bacterial genetic diversity. Functionally, acts as a ribosome collision sensor, splitting the ribosome into its 2 subunits. Detects stalled/collided 70S ribosomes which it binds and splits by an ATP-hydrolysis driven conformational change. Acts upstream of the ribosome quality control system (RQC), a ribosome-associated complex that mediates the extraction of incompletely synthesized nascent chains from stalled ribosomes and their subsequent degradation. Probably generates substrates for RQC. This Streptococcus pyogenes serotype M49 (strain NZ131) protein is Endonuclease MutS2.